The sequence spans 272 residues: Phosphate import ATP-binding protein PstB 1 (272 aa).

The region spanning 26–267 is the ABC transporter domain; the sequence is ITIENLDLHY…PMKKQTEDYI (242 aa). Residue 58–65 coordinates ATP; that stretch reads GPSGCGKS.

This sequence belongs to the ABC transporter superfamily. Phosphate importer (TC 3.A.1.7) family. In terms of assembly, the complex is composed of two ATP-binding proteins (PstB), two transmembrane proteins (PstC and PstA) and a solute-binding protein (PstS).

It localises to the cell inner membrane. It carries out the reaction phosphate(out) + ATP + H2O = ADP + 2 phosphate(in) + H(+). In terms of biological role, part of the ABC transporter complex PstSACB involved in phosphate import. Responsible for energy coupling to the transport system. The chain is Phosphate import ATP-binding protein PstB 1 from Vibrio vulnificus (strain YJ016).